The primary structure comprises 116 residues: Large ribosomal subunit protein uL22c (116 aa).

It belongs to the universal ribosomal protein uL22 family. As to quaternary structure, part of the 50S ribosomal subunit.

It localises to the plastid. Its subcellular location is the chloroplast. Its function is as follows. This protein binds specifically to 23S rRNA. Functionally, the globular domain of the protein is located near the polypeptide exit tunnel on the outside of the subunit, while an extended beta-hairpin is found that lines the wall of the exit tunnel in the center of the 70S ribosome. In Psilotum nudum (Whisk fern), this protein is Large ribosomal subunit protein uL22c (rpl22).